The chain runs to 544 residues: Lysophosphatidylcholine acyltransferase 2 (544 aa).

Topologically, residues 1 to 58 (MNRCAEAAAVAATVPGSGVGDSGLRPPMVPRQASFFPPPVPNPFVQQTRISAARRLQM) are cytoplasmic. A helical; Signal-anchor for type II membrane protein transmembrane segment spans residues 59-79 (ILLGIILLPVRALLVGLVLLL). Over 80 to 544 (AWPFAVISTV…EEGTSGKKVD (465 aa)) the chain is Lumenal. Residues 146–151 (HSTFFD) carry the HXXXXD motif motif. The EGTC motif signature appears at 220-223 (EGTC). EF-hand domains lie at 391–426 (PVSD…LCNP) and 428–463 (NTED…SLGV). Positions 404, 406, 408, 410, 415, 441, 443, 445, 447, and 452 each coordinate Ca(2+). Polar residues predominate over residues 520–530 (TAPSVASNKVS). The segment at 520–544 (TAPSVASNKVSPESHEEGTSGKKVD) is disordered. Residues 531 to 544 (PESHEEGTSGKKVD) show a composition bias toward basic and acidic residues.

The protein belongs to the 1-acyl-sn-glycerol-3-phosphate acyltransferase family.

Its subcellular location is the endoplasmic reticulum membrane. The protein resides in the golgi apparatus membrane. It is found in the cell membrane. The protein localises to the lipid droplet. It carries out the reaction a 1-acyl-sn-glycero-3-phosphocholine + an acyl-CoA = a 1,2-diacyl-sn-glycero-3-phosphocholine + CoA. The enzyme catalyses a 1-O-alkyl-sn-glycero-3-phosphocholine + acetyl-CoA = a 1-O-alkyl-2-acetyl-sn-glycero-3-phosphocholine + CoA. It catalyses the reaction a 1-acyl-sn-glycero-3-phosphate + an acyl-CoA = a 1,2-diacyl-sn-glycero-3-phosphate + CoA. The catalysed reaction is a 1-O-(1Z-alkenyl)-sn-glycero-3-phosphocholine + an acyl-CoA = a 1-O-(1Z-alkenyl)-2-acyl-sn-glycero-3-phosphocholine + CoA. It carries out the reaction 1-hexadecanoyl-sn-glycero-3-phosphate + (9Z)-octadecenoyl-CoA = 1-hexadecanoyl-2-(9Z-octadecenoyl)-sn-glycero-3-phosphate + CoA. The enzyme catalyses 1-(9Z-octadecenoyl)-sn-glycero-3-phosphate + (9Z)-octadecenoyl-CoA = 1,2-di-(9Z-octadecenoyl)-sn-glycero-3-phosphate + CoA. It catalyses the reaction 1-(9Z-octadecenoyl)-sn-glycero-3-phosphate + hexadecanoyl-CoA = 1-(9Z)-octadecenoyl-2-hexadecanoyl-sn-glycero-3-phosphate + CoA. The catalysed reaction is 1-heptadecanoyl-sn-glycero-3-phosphate + (9Z)-octadecenoyl-CoA = 1-heptadecanoyl-2-(9Z)-octadecenoyl-sn-glycero-3-phosphate + CoA. It carries out the reaction 1-octadecanoyl-sn-glycero-3-phosphate + (9Z)-octadecenoyl-CoA = 1-octadecanoyl-2-(9Z-octadecenoyl)-sn-glycero-3-phosphate + CoA. The enzyme catalyses heptadecanoyl-CoA + 1-(9Z-octadecenoyl)-sn-glycero-3-phosphate = 1-(9Z)-octadecenoyl-2-heptadecanoyl-sn-glycero-3-phosphate + CoA. It catalyses the reaction 1-(9Z-octadecenoyl)-sn-glycero-3-phosphate + (9Z,12Z)-octadecadienoyl-CoA = 1-(9Z)-octadecenoyl-2-(9Z,12Z)-octadecadienoyl-sn-glycero-3-phosphate + CoA. The catalysed reaction is 1-(9Z-octadecenoyl)-sn-glycero-3-phosphate + tetradecanoyl-CoA = 1-(9Z)-octadecenoyl-2-tetradecanoyl-sn-glycero-3-phosphate + CoA. It carries out the reaction pentadecanoyl-CoA + 1-(9Z-octadecenoyl)-sn-glycero-3-phosphate = 1-(9Z)-octadecenoyl-2-pentadecanoyl-sn-glycero-3-phosphate + CoA. The enzyme catalyses nonadecanoyl-CoA + 1-(9Z-octadecenoyl)-sn-glycero-3-phosphate = 1-(9Z)-octadecenoyl-2-nonadecanoyl-sn-glycero-3-phosphate + CoA. It catalyses the reaction 1-hexadecanoyl-sn-glycero-3-phosphocholine + (9Z)-octadecenoyl-CoA = 1-hexadecanoyl-2-(9Z-octadecenoyl)-sn-glycero-3-phosphocholine + CoA. The catalysed reaction is 1-O-hexadecyl-sn-glycero-3-phosphocholine + acetyl-CoA = 1-O-hexadecyl-2-acetyl-sn-glycero-3-phosphocholine + CoA. It carries out the reaction 1-O-octadecyl-sn-glycero-3-phosphocholine + acetyl-CoA = 1-O-octadecyl-2-acetyl-sn-glycero-3-phosphocholine + CoA. The enzyme catalyses 1-hexadecanoyl-sn-glycero-3-phosphocholine + acetyl-CoA = 1-hexadecanoyl-2-acetyl-sn-glycero-3-phosphocholine + CoA. It catalyses the reaction 1-octadecanoyl-sn-glycero-3-phosphocholine + acetyl-CoA = 1-octadecanoyl-2-acetyl-sn-glycero-3-phosphocholine + CoA. The catalysed reaction is a 1-O-(1Z-alkenyl)-sn-glycero-3-phosphocholine + acetyl-CoA = 1-O-(1Z)-alkenyl-2-acetyl-sn-glycero-3-phosphocholine + CoA. It carries out the reaction 1-O-octadecyl-sn-glycero-3-phosphocholine + (5Z,8Z,11Z,14Z)-eicosatetraenoyl-CoA = 1-O-octadecyl-2-(5Z,8Z,11Z,14Z)-eicosatetraenoyl-sn-glycero-3-phosphocholine + CoA. Its pathway is lipid metabolism; phospholipid metabolism. Functionally, exhibits both acyltransferase and acetyltransferase activities. Activity is calcium-dependent. Catalyzes the conversion of lysophosphatidylcholine (1-acyl-sn-glycero-3-phosphocholine or LPC) into phosphatidylcholine (1,2-diacyl-sn-glycero-3-phosphocholine or PC). Catalyzes the conversion 1-acyl-sn-glycerol-3-phosphate (lysophosphatidic acid or LPA) into 1,2-diacyl-sn-glycerol-3-phosphate (phosphatidic acid or PA) by incorporating an acyl moiety at the sn-2 position of the glycerol backbone. Involved in platelet-activating factor (PAF) biosynthesis by catalyzing the conversion of the PAF precursor, 1-O-alkyl-sn-glycero-3-phosphocholine (lyso-PAF) into 1-O-alkyl-2-acetyl-sn-glycero-3-phosphocholine (PAF). Also converts lyso-PAF to 1-O-alkyl-2-acyl-sn-glycero-3-phosphocholine (PC), a major component of cell membranes and a PAF precursor. Under resting conditions, acyltransferase activity is preferred. Upon acute inflammatory stimulus, acetyltransferase activity is enhanced and PAF synthesis increases. Involved in the regulation of lipid droplet number and size. The chain is Lysophosphatidylcholine acyltransferase 2 (Lpcat2) from Rattus norvegicus (Rat).